A 270-amino-acid polypeptide reads, in one-letter code: UPF0354 protein BPUM_2629 (270 aa).

This sequence belongs to the UPF0354 family.

The chain is UPF0354 protein BPUM_2629 from Bacillus pumilus (strain SAFR-032).